The sequence spans 222 residues: Glutathione S-transferase A1 (222 aa).

Residue Met1 is modified to N-acetylmethionine. Residue Ala2 is modified to N-acetylalanine; in Glutathione S-transferase A1, N-terminally processed. Residues 3–83 form the GST N-terminal domain; that stretch reads EKPKLHYFNA…YIASKYNLYG (81 aa). Lys4 is subject to N6-succinyllysine. Glutathione is bound by residues Tyr9, Arg45, 54–55, and 67–68; these read QV and QT. Residues 85 to 207 enclose the GST C-terminal domain; the sequence is DIKERALIDM…LQPGSPRKPP (123 aa).

The protein belongs to the GST superfamily. Alpha family. Homodimer or heterodimer of GSTA1 and GSTA2. As to expression, liver.

Its subcellular location is the cytoplasm. The catalysed reaction is RX + glutathione = an S-substituted glutathione + a halide anion + H(+). It carries out the reaction prostaglandin A2 + glutathione = prostaglandin A2-S-(R)-glutathione. The enzyme catalyses prostaglandin J2 + glutathione = prostaglandin J2-S-(R)-glutathione. It catalyses the reaction (13S)-hydroperoxy-(9Z,11E)-octadecadienoate + 2 glutathione = (13S)-hydroxy-(9Z,11E)-octadecadienoate + glutathione disulfide + H2O. The catalysed reaction is androst-5-ene-3,17-dione = androst-4-ene-3,17-dione. With respect to regulation, the isomerase activity is inhibited by S-methylglutathione (GSMe). In terms of biological role, glutathione S-transferase that catalyzes the nucleophilic attack of the sulfur atom of glutathione on the electrophilic groups of a wide range of exogenous and endogenous compounds. Involved in the formation of glutathione conjugates of both prostaglandin A2 (PGA2) and prostaglandin J2 (PGJ2). It also catalyzes the isomerization of D5-androstene-3,17-dione (AD) into D4-androstene-3,17-dione and may therefore play an important role in hormone biosynthesis. Through its glutathione-dependent peroxidase activity toward the fatty acid hydroperoxide (13S)-hydroperoxy-(9Z,11E)-octadecadienoate/13-HPODE it is also involved in the metabolism of oxidized linoleic acid. The polypeptide is Glutathione S-transferase A1 (GSTA1) (Homo sapiens (Human)).